A 130-amino-acid chain; its full sequence is MAIVGVGIDLVSIPDFAEQVDRPGTVFAETFTPGERRDAADKSSSAARHLAARWAAKEAVIKAWSGSRFAKRPALPEGIHRDIEVVTDMWGRPKVRLTGDIAEHLREATIHVSLTHEGDTAAAVAVIEEP.

Residues Asp-9 and Glu-58 each coordinate Mg(2+).

Belongs to the P-Pant transferase superfamily. AcpS family. Mg(2+) serves as cofactor.

The protein resides in the cytoplasm. The catalysed reaction is apo-[ACP] + CoA = holo-[ACP] + adenosine 3',5'-bisphosphate + H(+). Its function is as follows. Transfers the 4'-phosphopantetheine moiety from coenzyme A to a Ser of acyl-carrier-protein. In Mycobacterium sp. (strain JLS), this protein is Holo-[acyl-carrier-protein] synthase.